A 405-amino-acid polypeptide reads, in one-letter code: Tryptophan synthase beta chain (405 aa).

Lys98 bears the N6-(pyridoxal phosphate)lysine mark.

This sequence belongs to the TrpB family. Tetramer of two alpha and two beta chains. Pyridoxal 5'-phosphate is required as a cofactor.

It catalyses the reaction (1S,2R)-1-C-(indol-3-yl)glycerol 3-phosphate + L-serine = D-glyceraldehyde 3-phosphate + L-tryptophan + H2O. It functions in the pathway amino-acid biosynthesis; L-tryptophan biosynthesis; L-tryptophan from chorismate: step 5/5. Its function is as follows. The beta subunit is responsible for the synthesis of L-tryptophan from indole and L-serine. This is Tryptophan synthase beta chain from Parvibaculum lavamentivorans (strain DS-1 / DSM 13023 / NCIMB 13966).